Consider the following 41-residue polypeptide: Large ribosomal subunit protein bL36 (41 aa).

The protein belongs to the bacterial ribosomal protein bL36 family.

The polypeptide is Large ribosomal subunit protein bL36 (Zymomonas mobilis subsp. mobilis (strain ATCC 31821 / ZM4 / CP4)).